The primary structure comprises 612 residues: MIVDNSKDFDLKSFLANLTTHSGVYRMLDKHGEIIYVGKAKNLKNRVNSYFSKGAKDSKTLMMVEQIARIEITITPSDYEAYLLENNLIKQHRPKYNILFKDDKSYPYLVISRDKFPRVSFYRSKSAYKKGQCFGPYVSISSVKNTLNTIQKIFPIRQCENSYYKSRVRPCLQYQIKCCLAPCVGLVSQQQYDEQLAILKKFLAGKFSSVLEEISAKMYQASEDMEYEKAQVYRDQLVVLRKLQQQQIVDIQEDKTFDVIGIYMQDSYASIALLQIQNGDVVADRHWSIDAKGQDKTSIMHAFLSHFYLGDEIRNIWPKNIILSKVEFADITDLMNSISQKIGQAINWIIAPAADNLKWLKLAEVNARQKLNIYTSSKSQYQKRLESLKEFLELEKDIKRIECFDISHFQGEATIASCVVYTDDGEDRKSHRRYNIKDIKSGDDYAAIHQAVSRRVSSGLEADNLPDVMIIDGGKGQIHQAEAVFREYGIQDKVQLVSLGKGIERISGKEKIYKGFDDTEYTLDEHNPGFLLLRQVRDSAHDHAIKGQRKKVSANRQSSIIEEIEGVGPKRRKALMMYFGGWQELSRASVDEIAKVKGISKKLAQEIWECFH.

The 79-residue stretch at 20-98 (THSGVYRMLD…IKQHRPKYNI (79 aa)) folds into the GIY-YIG domain. The UVR domain occupies 208-243 (SSVLEEISAKMYQASEDMEYEKAQVYRDQLVVLRKL).

The protein belongs to the UvrC family. Interacts with UvrB in an incision complex.

The protein localises to the cytoplasm. In terms of biological role, the UvrABC repair system catalyzes the recognition and processing of DNA lesions. UvrC both incises the 5' and 3' sides of the lesion. The N-terminal half is responsible for the 3' incision and the C-terminal half is responsible for the 5' incision. The chain is UvrABC system protein C from Francisella tularensis subsp. tularensis (strain FSC 198).